Here is a 106-residue protein sequence, read N- to C-terminus: Large ribosomal subunit protein bL21 (106 aa).

It belongs to the bacterial ribosomal protein bL21 family. In terms of assembly, part of the 50S ribosomal subunit. Contacts protein L20.

This protein binds to 23S rRNA in the presence of protein L20. The protein is Large ribosomal subunit protein bL21 of Chlamydia abortus (strain DSM 27085 / S26/3) (Chlamydophila abortus).